Here is a 250-residue protein sequence, read N- to C-terminus: 4-hydroxy-tetrahydrodipicolinate reductase (250 aa).

NAD(+) is bound by residues 10-15 (GVKGRI), 78-80 (GTT), and 105-108 (APNF). Histidine 135 (proton donor/acceptor) is an active-site residue. Histidine 136 contributes to the (S)-2,3,4,5-tetrahydrodipicolinate binding site. Lysine 139 (proton donor) is an active-site residue. (S)-2,3,4,5-tetrahydrodipicolinate is bound at residue 145–146 (GT).

The protein belongs to the DapB family.

Its subcellular location is the cytoplasm. It catalyses the reaction (S)-2,3,4,5-tetrahydrodipicolinate + NAD(+) + H2O = (2S,4S)-4-hydroxy-2,3,4,5-tetrahydrodipicolinate + NADH + H(+). The enzyme catalyses (S)-2,3,4,5-tetrahydrodipicolinate + NADP(+) + H2O = (2S,4S)-4-hydroxy-2,3,4,5-tetrahydrodipicolinate + NADPH + H(+). It participates in amino-acid biosynthesis; L-lysine biosynthesis via DAP pathway; (S)-tetrahydrodipicolinate from L-aspartate: step 4/4. Catalyzes the conversion of 4-hydroxy-tetrahydrodipicolinate (HTPA) to tetrahydrodipicolinate. In Streptomyces avermitilis (strain ATCC 31267 / DSM 46492 / JCM 5070 / NBRC 14893 / NCIMB 12804 / NRRL 8165 / MA-4680), this protein is 4-hydroxy-tetrahydrodipicolinate reductase.